The primary structure comprises 243 residues: Putative glycerophosphodiester phosphodiesterase YhdW (243 aa).

The 238-residue stretch at 1–238 (MYIIAHRGAS…DYPDFIIKDG (238 aa)) folds into the GP-PDE domain. Residue His6 is the Proton acceptor of the active site. 2 residues coordinate Ca(2+): Glu33 and Asp35. His48 functions as the Proton donor in the catalytic mechanism. Glu107 contributes to the Ca(2+) binding site.

The protein belongs to the glycerophosphoryl diester phosphodiesterase family. Ca(2+) is required as a cofactor.

The enzyme catalyses a sn-glycero-3-phosphodiester + H2O = an alcohol + sn-glycerol 3-phosphate + H(+). In terms of biological role, glycerophosphodiester phosphodiesterase hydrolyzes glycerophosphodiesters into glycerol-3-phosphate (G3P) and the corresponding alcohol. The chain is Putative glycerophosphodiester phosphodiesterase YhdW (yhdW) from Bacillus subtilis (strain 168).